A 570-amino-acid polypeptide reads, in one-letter code: Urease subunit alpha (570 aa).

The region spanning 131–570 is the Urease domain; the sequence is GGFDAHIHFI…LPMAQRYFLF (440 aa). Residues histidine 136, histidine 138, and lysine 219 each coordinate Ni(2+). An N6-carboxylysine modification is found at lysine 219. Histidine 221 lines the substrate pocket. Residues histidine 248 and histidine 274 each coordinate Ni(2+). Residue histidine 322 is the Proton donor of the active site. Aspartate 362 lines the Ni(2+) pocket.

It belongs to the metallo-dependent hydrolases superfamily. Urease alpha subunit family. As to quaternary structure, heterotrimer of UreA (gamma), UreB (beta) and UreC (alpha) subunits. Three heterotrimers associate to form the active enzyme. It depends on Ni cation as a cofactor. Post-translationally, carboxylation allows a single lysine to coordinate two nickel ions.

Its subcellular location is the cytoplasm. It carries out the reaction urea + 2 H2O + H(+) = hydrogencarbonate + 2 NH4(+). It participates in nitrogen metabolism; urea degradation; CO(2) and NH(3) from urea (urease route): step 1/1. This chain is Urease subunit alpha, found in Mesorhizobium japonicum (strain LMG 29417 / CECT 9101 / MAFF 303099) (Mesorhizobium loti (strain MAFF 303099)).